Consider the following 308-residue polypeptide: tRNA pseudouridine synthase B (308 aa).

Asp49 serves as the catalytic Nucleophile.

It belongs to the pseudouridine synthase TruB family. Type 1 subfamily.

It catalyses the reaction uridine(55) in tRNA = pseudouridine(55) in tRNA. Its function is as follows. Responsible for synthesis of pseudouridine from uracil-55 in the psi GC loop of transfer RNAs. This Nitrosococcus oceani (strain ATCC 19707 / BCRC 17464 / JCM 30415 / NCIMB 11848 / C-107) protein is tRNA pseudouridine synthase B.